The sequence spans 466 residues: 3-isopropylmalate dehydratase large subunit (466 aa).

3 residues coordinate [4Fe-4S] cluster: Cys347, Cys407, and Cys410.

Belongs to the aconitase/IPM isomerase family. LeuC type 1 subfamily. As to quaternary structure, heterodimer of LeuC and LeuD. It depends on [4Fe-4S] cluster as a cofactor.

It catalyses the reaction (2R,3S)-3-isopropylmalate = (2S)-2-isopropylmalate. It participates in amino-acid biosynthesis; L-leucine biosynthesis; L-leucine from 3-methyl-2-oxobutanoate: step 2/4. Its function is as follows. Catalyzes the isomerization between 2-isopropylmalate and 3-isopropylmalate, via the formation of 2-isopropylmaleate. The protein is 3-isopropylmalate dehydratase large subunit of Serratia proteamaculans (strain 568).